A 227-amino-acid polypeptide reads, in one-letter code: Cytidylate kinase (227 aa).

10–18 is an ATP binding site; it reads GPASSGKST.

This sequence belongs to the cytidylate kinase family. Type 1 subfamily.

The protein resides in the cytoplasm. The enzyme catalyses CMP + ATP = CDP + ADP. It carries out the reaction dCMP + ATP = dCDP + ADP. This is Cytidylate kinase from Streptococcus agalactiae serotype V (strain ATCC BAA-611 / 2603 V/R).